The following is a 431-amino-acid chain: Histidine--tRNA ligase (431 aa).

It belongs to the class-II aminoacyl-tRNA synthetase family. As to quaternary structure, homodimer.

It localises to the cytoplasm. It carries out the reaction tRNA(His) + L-histidine + ATP = L-histidyl-tRNA(His) + AMP + diphosphate + H(+). The protein is Histidine--tRNA ligase of Neisseria meningitidis serogroup B (strain ATCC BAA-335 / MC58).